The following is a 109-amino-acid chain: Protein TAR1 (109 aa).

A disordered region spans residues 62–109 (HFTNNWDPRHTGFSPSMTSCSKEHRQGPATKLPSSNYNSDVEDARFQI).

It localises to the mitochondrion. Functionally, may be involved in mtDNA stability or mitochondrial gene expression regulation at the post-transcriptional level. The protein is Protein TAR1 (TAR1-A) of Kluyveromyces lactis (strain ATCC 8585 / CBS 2359 / DSM 70799 / NBRC 1267 / NRRL Y-1140 / WM37) (Yeast).